Here is an 80-residue protein sequence, read N- to C-terminus: Small ribosomal subunit protein bS18 (80 aa).

It belongs to the bacterial ribosomal protein bS18 family. As to quaternary structure, part of the 30S ribosomal subunit. Forms a tight heterodimer with protein bS6.

In terms of biological role, binds as a heterodimer with protein bS6 to the central domain of the 16S rRNA, where it helps stabilize the platform of the 30S subunit. The polypeptide is Small ribosomal subunit protein bS18 (Clostridium botulinum (strain 657 / Type Ba4)).